Reading from the N-terminus, the 436-residue chain is Prenyltransferase nscD (436 aa).

Belongs to the tryptophan dimethylallyltransferase family.

It functions in the pathway secondary metabolite biosynthesis. Prenyltransferase; part of the gene cluster that mediates the biosynthesis of neosartoricin B, a prenylated anthracenone that probably exhibits T-cell antiproliferative activity, suggestive of a physiological role as an immunosuppressive agent. The non-reducing polyketide synthase nscA probably synthesizes and cyclizes the decaketide backbone. The hydrolase nscB then mediates the product release through hydrolysis followed by spontaneous decarboxylation. The prenyltransferase nscD catalyzes the addition of the dimethylallyl group to the aromatic C5. The FAD-dependent monooxygenase nscC is then responsible for the stereospecific hydroxylation at C2. Neosartoricin B can be converted into two additional compounds neosartoricins C and D. Neosartoricin C is a spirocyclic compound that is cyclized through the attack of C3 hydroxyl on C14, followed by dehydration. On the other hand, neosartoricin D is a further cyclized compound in which attack of C2 on C14 in neosartoricin C results in the formation of the acetal-containing dioxabicyclo-octanone ring. Both of these compounds are novel and possibly represent related metabolites of the gene cluster. This is Prenyltransferase nscD from Arthroderma benhamiae (strain ATCC MYA-4681 / CBS 112371) (Trichophyton mentagrophytes).